Consider the following 1097-residue polypeptide: U3 small nucleolar RNA-associated protein 22 (1097 aa).

Composition is skewed to basic and acidic residues over residues 1–10 (MNGLKREHES) and 18–27 (KTPETEYDSH). Residues 1–27 (MNGLKREHESSSSQDGSKTPETEYDSH) form a disordered region.

It belongs to the NRAP family. As to quaternary structure, component of the ribosomal small subunit (SSU) processome.

The protein localises to the nucleus. It localises to the nucleolus. Involved in nucleolar processing of pre-18S ribosomal RNA and ribosome assembly. This is U3 small nucleolar RNA-associated protein 22 from Schizosaccharomyces pombe (strain 972 / ATCC 24843) (Fission yeast).